Consider the following 372-residue polypeptide: Glutamate 5-kinase (372 aa).

An ATP-binding site is contributed by Lys-14. Residues Ser-54, Asp-141, and Asn-153 each contribute to the substrate site. 173–174 contacts ATP; sequence TD. Positions 280–358 constitute a PUA domain; sequence RGTLVLDAGA…EAIESILGYS (79 aa).

This sequence belongs to the glutamate 5-kinase family.

Its subcellular location is the cytoplasm. It carries out the reaction L-glutamate + ATP = L-glutamyl 5-phosphate + ADP. It participates in amino-acid biosynthesis; L-proline biosynthesis; L-glutamate 5-semialdehyde from L-glutamate: step 1/2. Its function is as follows. Catalyzes the transfer of a phosphate group to glutamate to form L-glutamate 5-phosphate. The protein is Glutamate 5-kinase of Pseudomonas putida (strain ATCC 700007 / DSM 6899 / JCM 31910 / BCRC 17059 / LMG 24140 / F1).